The following is a 188-amino-acid chain: Inosine triphosphate pyrophosphatase (188 aa).

12 to 17 lines the ITP pocket; it reads TGNANK. Residue Glu40 participates in Mg(2+) binding. ITP-binding positions include Lys52, 68–69, Lys85, 144–147, Lys165, and 170–171; these read DT, FGWD, and HR.

Belongs to the HAM1 NTPase family. As to quaternary structure, homodimer. Mg(2+) serves as cofactor. It depends on Mn(2+) as a cofactor.

The protein localises to the cytoplasm. The protein resides in the nucleus. It carries out the reaction ITP + H2O = IMP + diphosphate + H(+). It catalyses the reaction dITP + H2O = dIMP + diphosphate + H(+). The enzyme catalyses XTP + H2O = XMP + diphosphate + H(+). Pyrophosphatase that hydrolyzes non-canonical purine nucleotides such as inosine triphosphate (ITP), deoxyinosine triphosphate (dITP) or xanthosine 5'-triphosphate (XTP) to their respective monophosphate derivatives. The enzyme does not distinguish between the deoxy- and ribose forms. Probably excludes non-canonical purines from RNA and DNA precursor pools, thus preventing their incorporation into RNA and DNA and avoiding chromosomal lesions. This Podospora anserina (strain S / ATCC MYA-4624 / DSM 980 / FGSC 10383) (Pleurage anserina) protein is Inosine triphosphate pyrophosphatase.